Reading from the N-terminus, the 281-residue chain is Tumor necrosis factor ligand superfamily member 10 (281 aa).

The Cytoplasmic portion of the chain corresponds to 1 to 17; it reads MAMMEVQGGPSLGQTCV. A helical; Signal-anchor for type II membrane protein membrane pass occupies residues 18–38; the sequence is LIVIFTVLLQSLCVAVTYVYF. The Extracellular portion of the chain corresponds to 39 to 281; the sequence is TNELKQMQDK…ASFFGAFLVG (243 aa). Residues 122–280 enclose the THD domain; sequence VAAHITGTRG…EASFFGAFLV (159 aa). The tract at residues 124-144 is disordered; the sequence is AHITGTRGRSNTLSSPNSKNE. Residues 130–141 show a composition bias toward polar residues; sequence RGRSNTLSSPNS. Cysteine 230 is a Zn(2+) binding site.

The protein belongs to the tumor necrosis factor family. Homotrimer. One TNFSF10 homotrimer interacts with three TNFSF10A mononers. One TNFSF10 homotrimer interacts with three TNFSF10B mononers. In terms of processing, tyrosine phosphorylated by PKDCC/VLK. As to expression, widespread; most predominant in spleen, lung and prostate.

It is found in the cell membrane. The protein resides in the secreted. Functionally, cytokine that binds to TNFRSF10A/TRAILR1, TNFRSF10B/TRAILR2, TNFRSF10C/TRAILR3, TNFRSF10D/TRAILR4 and possibly also to TNFRSF11B/OPG. Induces apoptosis. Its activity may be modulated by binding to the decoy receptors TNFRSF10C/TRAILR3, TNFRSF10D/TRAILR4 and TNFRSF11B/OPG that cannot induce apoptosis. This is Tumor necrosis factor ligand superfamily member 10 (TNFSF10) from Homo sapiens (Human).